The following is a 182-amino-acid chain: Endoribonuclease YbeY (182 aa).

Positions 120, 124, and 130 each coordinate Zn(2+). The interval 157–182 (RGVSFAPKPTGAGAFPSAADRDDTQN) is disordered.

It belongs to the endoribonuclease YbeY family. Requires Zn(2+) as cofactor.

Its subcellular location is the cytoplasm. Single strand-specific metallo-endoribonuclease involved in late-stage 70S ribosome quality control and in maturation of the 3' terminus of the 16S rRNA. This is Endoribonuclease YbeY from Corynebacterium jeikeium (strain K411).